A 195-amino-acid chain; its full sequence is Imidazoleglycerol-phosphate dehydratase (195 aa).

It belongs to the imidazoleglycerol-phosphate dehydratase family.

The protein resides in the cytoplasm. The enzyme catalyses D-erythro-1-(imidazol-4-yl)glycerol 3-phosphate = 3-(imidazol-4-yl)-2-oxopropyl phosphate + H2O. It participates in amino-acid biosynthesis; L-histidine biosynthesis; L-histidine from 5-phospho-alpha-D-ribose 1-diphosphate: step 6/9. This chain is Imidazoleglycerol-phosphate dehydratase, found in Parafrankia sp. (strain EAN1pec).